A 1079-amino-acid chain; its full sequence is Capping protein inhibiting regulator of actin dynamics (1079 aa).

The span at 1–11 (MSQENVSDKVR) shows a compositional bias: basic and acidic residues. 7 disordered regions span residues 1–293 (MSQE…EEER), 308–327 (ERKREQEERRRKEEEEAEKR), 341–383 (EHRI…EWKR), 420–453 (PVTPATGQQGETTAETWEGAKASSPGGPDSPTLS), 493–522 (EGKKAMGTPPSKSKTSPDRKSGKTKSVFES), 606–639 (IFGQEEGVKTESAFTETSPVQKELPSLGTKVQSR), and 658–1054 (PSFL…TTQV). The span at 36 to 45 (DEGSSDEEEV) shows a compositional bias: acidic residues. A compositionally biased stretch (basic and acidic residues) spans 64 to 76 (SAKEKSVSHDTVQ). The span at 115–134 (AKHKLSVKPKNQRVSRKHRR) shows a compositional bias: basic residues. Positions 140–158 (HEDDFSEIQEEFEKDEEVF) are enriched in acidic residues. The segment covering 159–293 (DSSREDYGII…EERKRAEEER (135 aa)) has biased composition (basic and acidic residues). A compositionally biased stretch (polar residues) spans 420 to 434 (PVTPATGQQGETTAE). Over residues 670–682 (PKSQRSESGSPIQ) the composition is skewed to polar residues. Residues 684–695 (ESEDSDTKDEDG) are compositionally biased toward acidic residues. Residues 756–781 (DNSTLSEKSSPISPQQENIEFQTTVA) show a composition bias toward polar residues. 2 stretches are compositionally biased toward basic and acidic residues: residues 896 to 930 (WREKTDRRTELIKKEKPSLQARHSLDSSRSQDKET) and 944 to 983 (GFREQQQNREERRNQREAKLAEKQARDRESAGSSPTEDKG). Positions 984 to 993 (NGSSSIISKH) are enriched in polar residues. The span at 994–1016 (QTADENKRPDTLLARFERRDNLK) shows a compositional bias: basic and acidic residues. The segment covering 1020–1033 (TLPSSVTVEITDST) has biased composition (polar residues).

As to quaternary structure, directly interacts with actin-capping proteins; this interaction decreases the binding of capping proteins to actin.

It is found in the cytoplasm. It localises to the cytosol. Involved in epithelial cell integrity by acting on the maintenance of the actin cytoskeleton. Positively regulates the actin polymerization, by inhibiting the interaction of actin-capping proteins with actin. The polypeptide is Capping protein inhibiting regulator of actin dynamics (crad) (Danio rerio (Zebrafish)).